Consider the following 318-residue polypeptide: NADH-ubiquinone oxidoreductase chain 1 (318 aa).

8 helical membrane passes run 2–22 (PMIN…FLML), 69–89 (ALYI…WTPL), 100–120 (LGLL…LWSG), 147–167 (AIIL…TLIT), 171–191 (HIWL…STLA), 222–242 (LFFM…TMIF), 253–273 (ELYT…FLWI), and 294–314 (LPLT…IASI).

The protein belongs to the complex I subunit 1 family. Core subunit of respiratory chain NADH dehydrogenase (Complex I) which is composed of 45 different subunits.

The protein resides in the mitochondrion inner membrane. The enzyme catalyses a ubiquinone + NADH + 5 H(+)(in) = a ubiquinol + NAD(+) + 4 H(+)(out). Functionally, core subunit of the mitochondrial membrane respiratory chain NADH dehydrogenase (Complex I) which catalyzes electron transfer from NADH through the respiratory chain, using ubiquinone as an electron acceptor. Essential for the catalytic activity and assembly of complex I. This chain is NADH-ubiquinone oxidoreductase chain 1 (MT-ND1), found in Hylobates lar (Lar gibbon).